We begin with the raw amino-acid sequence, 216 residues long: Octanoyltransferase (216 aa).

Positions 31 to 205 (STTRDEVWLV…ELVTLLDYEQ (175 aa)) constitute a BPL/LPL catalytic domain. Residues 70–77 (RGGQVTYH), 137–139 (SLG), and 150–152 (GLA) contribute to the substrate site. Cys-168 functions as the Acyl-thioester intermediate in the catalytic mechanism.

It belongs to the LipB family.

Its subcellular location is the cytoplasm. It carries out the reaction octanoyl-[ACP] + L-lysyl-[protein] = N(6)-octanoyl-L-lysyl-[protein] + holo-[ACP] + H(+). It functions in the pathway protein modification; protein lipoylation via endogenous pathway; protein N(6)-(lipoyl)lysine from octanoyl-[acyl-carrier-protein]: step 1/2. In terms of biological role, catalyzes the transfer of endogenously produced octanoic acid from octanoyl-acyl-carrier-protein onto the lipoyl domains of lipoate-dependent enzymes. Lipoyl-ACP can also act as a substrate although octanoyl-ACP is likely to be the physiological substrate. The protein is Octanoyltransferase of Vibrio cholerae serotype O1 (strain ATCC 39315 / El Tor Inaba N16961).